The chain runs to 486 residues: BTB/POZ domain and ankyrin repeat-containing protein BOP (486 aa).

Residues 25–115 form the BTB domain; sequence SDVTFSVEGR…LYSGQVSIVP (91 aa). Residues 121–135 form a C2HC NPR-type zinc finger; that stretch reads RPNCGERGCWHTHCS. Zn(2+) is bound by residues Cys-124, Cys-129, His-131, and Cys-134. ANK repeat units lie at residues 257–286, 287–316, 321–350, and 354–388; these read QKIRRMRRALDSSDVELVKLMVMGEGLNLD, EALALHYAVENCSREVAKALLELGAADVNY, AGKTPLHIAAEMVSPDMVAVLLDHHADPNV, and DNVTPLDILRTLTSDFLFKGAIPGLTHIEPNKLRL. Disordered regions lie at residues 403–442 and 464–486; these read EEGNANNNPPSSTTTTLPMYHHPMNDDHNSSSSSGNNHNI and QMSDDHGGRHGDPAMYHHSHHDY. Composition is skewed to low complexity over residues 406 to 418 and 432 to 442; these read NANNNPPSSTTTT and SSSSSGNNHNI. A compositionally biased stretch (basic and acidic residues) spans 466-475; the sequence is SDDHGGRHGD.

Belongs to the plant 'ANKYRIN-BTB/POZ' family. 'NOOT-BOP-COCH-like' (NBCL) subfamily. Homodimer. In terms of tissue distribution, expressed in xylem vessels and parenchyma cells of pedicel vascular tissue in the abscission zone (AZ). Accumulates in developing root nodules and present in roots, especially in the upper part.

The protein localises to the nucleus. It localises to the cytoplasm. Its subcellular location is the cell membrane. It participates in protein modification; protein ubiquitination. Functionally, may act as a substrate-specific adapter of an E3 ubiquitin-protein ligase complex (CUL3-RBX1-BTB) which mediates the ubiquitination and subsequent proteasomal degradation of target proteins. Transcriptional co-regulator involved in promoting the fate and determination of leaf and flower meristems. Required for the abscission of senescent organs, probably by regulating the cell wall disorganization in abscission zones (AZs, e.g. pulvini at the base of leaves). Involved in the coordination of the symbiotic nodule developmental program; promotes the formation of root nodules by interacting directly with APP1 to modulate the expression of the nuclear transcription factor Y subunit (NF-YA1), a key nodulin. Necessary for the robust maintenance of nodule identity throughout the nodule developmental program. The sequence is that of BTB/POZ domain and ankyrin repeat-containing protein BOP from Lupinus luteus (European yellow lupine).